Consider the following 513-residue polypeptide: Na(+)/H(+) antiporter NhaB (513 aa).

A run of 12 helical transmembrane segments spans residues Leu23 to Ala43, Ile52 to Ile72, Leu97 to Phe117, Leu120 to Phe140, Phe144 to Ile164, Leu202 to Pro222, Phe238 to Leu258, Ala303 to Ile323, Thr348 to Ile368, Leu391 to Ile411, Ala447 to Ile467, and Val475 to Phe495.

Belongs to the NhaB Na(+)/H(+) (TC 2.A.34) antiporter family.

Its subcellular location is the cell inner membrane. The enzyme catalyses 2 Na(+)(in) + 3 H(+)(out) = 2 Na(+)(out) + 3 H(+)(in). Functionally, na(+)/H(+) antiporter that extrudes sodium in exchange for external protons. The polypeptide is Na(+)/H(+) antiporter NhaB (Escherichia coli O6:K15:H31 (strain 536 / UPEC)).